Consider the following 101-residue polypeptide: Gastrin (101 aa).

Positions 1–21 (MQRLCVYVLIFALALAAFSEA) are cleaved as a signal peptide. Positions 22 to 82 (SWKPRSQQPD…SKKQGPWLEE (61 aa)) are disordered. Glutamine 59 carries the post-translational modification Pyrrolidone carboxylic acid; in form big gastrin. Glutamine 76 is modified (pyrrolidone carboxylic acid; in form gastrin). Tyrosine 87 is modified (sulfotyrosine; partial). At phenylalanine 92 the chain carries Phenylalanine amide. The residue at position 96 (serine 96) is a Phosphoserine. Positions 96-101 (SAEDEN) are cleaved as a propeptide — removed in mature form.

Belongs to the gastrin/cholecystokinin family. Post-translationally, two different processing pathways probably exist in antral G-cells. In the dominant pathway progastrin is cleaved at three sites resulting in two major bioactive gastrins, gastrin-34 and gastrin-17. In the putative alternative pathway, progastrin may be processed only at the most C-terminal dibasic site resulting in the synthesis of gastrin-71. Sulfation enhances proteolytic processing, and blocks peptide degradation. Levels of sulfation differ between proteolytically-cleaved gastrins. Thus, gastrin-6 is almost 73% sulfated, whereas the larger gastrins are less than 50% sulfated. Sulfation levels are also tissue-specific.

Its subcellular location is the secreted. Functionally, gastrin stimulates the stomach mucosa to produce and secrete hydrochloric acid and the pancreas to secrete its digestive enzymes. It also stimulates smooth muscle contraction and increases blood circulation and water secretion in the stomach and intestine. The polypeptide is Gastrin (GAST) (Homo sapiens (Human)).